We begin with the raw amino-acid sequence, 150 residues long: Lipoprotein signal peptidase (150 aa).

Helical transmembrane passes span 58 to 78 and 85 to 107; these read FFIIVSIILILFLCYMIFKST and SFSLIVGGAIGNLFDRIVKGYVV. Residues Asp108 and Asp122 contribute to the active site. Residues 117–137 traverse the membrane as a helical segment; the sequence is VFNLADFFITGGVLLLTFLIL.

It belongs to the peptidase A8 family.

It is found in the cell membrane. The enzyme catalyses Release of signal peptides from bacterial membrane prolipoproteins. Hydrolyzes -Xaa-Yaa-Zaa-|-(S,diacylglyceryl)Cys-, in which Xaa is hydrophobic (preferably Leu), and Yaa (Ala or Ser) and Zaa (Gly or Ala) have small, neutral side chains.. It functions in the pathway protein modification; lipoprotein biosynthesis (signal peptide cleavage). This protein specifically catalyzes the removal of signal peptides from prolipoproteins. The protein is Lipoprotein signal peptidase of Caldicellulosiruptor bescii (strain ATCC BAA-1888 / DSM 6725 / KCTC 15123 / Z-1320) (Anaerocellum thermophilum).